We begin with the raw amino-acid sequence, 183 residues long: UPF0302 protein BH1670 (183 aa).

The protein belongs to the UPF0302 family.

This is UPF0302 protein BH1670 from Halalkalibacterium halodurans (strain ATCC BAA-125 / DSM 18197 / FERM 7344 / JCM 9153 / C-125) (Bacillus halodurans).